The following is a 1063-amino-acid chain: Kinesin-like protein KIN-7H (1063 aa).

A Kinesin motor domain is found at 18 to 342 (KIYVSVRMRP…LLFASCAKEV (325 aa)). 106-113 (GQTSSGKT) lines the ATP pocket. Residues 351-436 (VMSDKALVKH…KNQEKETLST (86 aa)) are a coiled coil. Positions 574 to 664 (SDISIGPVEN…ESNLTKNPAL (91 aa)) are disordered.

Belongs to the TRAFAC class myosin-kinesin ATPase superfamily. Kinesin family. KIN-7 subfamily.

This Arabidopsis thaliana (Mouse-ear cress) protein is Kinesin-like protein KIN-7H.